The following is a 231-amino-acid chain: MSKYSEIAAQGLWKNNPGLVQLLGLCPLLAVTATITNALGLGVATLLVLIGSNVLVSLVRDFVPKEIRIPVFVMIIAALVTCVQLLINAYAYNLYLSLGIFLPLIVTNCVIIGRAEAFASRNSLAHSAFDGLMMGLGFTAVLVVLGASRELLGQGTLFGGADLLLGDWASVLTIHVWHVDTPFLLAMLPPGAFIGMGLLIALKNVIDSRVNAMQPKVESVSVTRARITKVN.

The next 7 helical transmembrane spans lie at 18 to 38 (GLVQ…ITNA), 39 to 59 (LGLG…VSLV), 69 to 89 (IPVF…LINA), 93 to 113 (NLYL…VIIG), 127 to 147 (SAFD…VLGA), 157 to 177 (LFGG…IHVW), and 182 to 202 (PFLL…LIAL).

Belongs to the NqrDE/RnfAE family. As to quaternary structure, the complex is composed of six subunits: RnfA, RnfB, RnfC, RnfD, RnfE and RnfG.

It localises to the cell inner membrane. In terms of biological role, part of a membrane-bound complex that couples electron transfer with translocation of ions across the membrane. This Shewanella frigidimarina (strain NCIMB 400) protein is Ion-translocating oxidoreductase complex subunit E.